The chain runs to 603 residues: Podocalyxin-like protein 2 (603 aa).

Positions 1–28 (MARPLRAARLPPPLLLLLAAGASLGAYA) are cleaved as a signal peptide. At 29–499 (VGVDEPGPEG…ATQVRSDYGT (471 aa)) the chain is on the extracellular side. A disordered region spans residues 53-92 (FEPLDSEEPSEAMGLDAGLAPGSGFPSEDSEESRLLQPPQ). Residue serine 75 is glycosylated (O-linked (Xyl...) (chondroitin sulfate) serine). Position 93 is a sulfotyrosine (tyrosine 93). Asparagine 101 carries N-linked (GlcNAc...) asparagine glycosylation. Position 113 is a sulfotyrosine (tyrosine 113). Residues 124–368 (SMEDPGQAPD…LEGQAAEAHS (245 aa)) are disordered. Positions 156 to 187 (QEEEEEEEEEEEEREEEEREKEAEEEEEEEEL) are enriched in acidic residues. A compositionally biased stretch (low complexity) spans 196–216 (ATAQAHAPSPSTSSSTSSQSP). Composition is skewed to polar residues over residues 240-266 (VKPT…QESG), 302-314 (ALPS…TVPP), and 339-349 (DTESTPSSATW). Asparagine 260 carries N-linked (GlcNAc...) asparagine glycosylation. Asparagine 394 carries N-linked (GlcNAc...) asparagine glycosylation. A helical transmembrane segment spans residues 500 to 520 (LFVVLVIIGVICFIIIVLGLL). Over 521–603 (YNCWQRRMPK…SDVFEEDTHL (83 aa)) the chain is Cytoplasmic. The segment covering 558–570 (DSQSEMQEKQPSL) has biased composition (polar residues). Positions 558–603 (DSQSEMQEKQPSLNGGAINGPSSWSALMGSKRDPEDSDVFEEDTHL) are disordered. Residues serine 569 and serine 594 each carry the phosphoserine modification. Positions 592–603 (EDSDVFEEDTHL) are enriched in acidic residues.

It belongs to the podocalyxin family. In terms of assembly, homodimer; disulfide-linked. Interacts with SELL, SELE and SELP. Glycosylated; contains chondroitin sulfate. Displays sialylated O-linked oligosaccharides. Post-translationally, sulfation is necessary for interaction with SELL. Sialylated O-linked oligosaccharides are necessary for interaction with SELL, SELE and SELP.

Its subcellular location is the membrane. In terms of biological role, acts as a ligand for vascular selectins. Mediates rapid rolling of leukocytes over vascular surfaces through high affinity divalent cation-dependent interactions with E-, P- and L-selectins. This is Podocalyxin-like protein 2 (Podxl2) from Mus musculus (Mouse).